A 389-amino-acid chain; its full sequence is Ribonucleoside-diphosphate reductase subunit M2 (389 aa).

Ser-20 is subject to Phosphoserine. Thr-33 carries the post-translational modification Phosphothreonine. The short motif at 49 to 51 (RRI) is the Cy element. The Fe cation site is built by Asp-138, Glu-169, and His-172. Tyr-176 is a catalytic residue. Positions 232, 266, and 269 each coordinate Fe cation.

The protein belongs to the ribonucleoside diphosphate reductase small chain family. Heterodimer of a large and a small subunit. Interacts (via Cy motif and when phosphorylated at Thr-33) with CCNF; the interaction occurs exclusively in G2 and early M. The cofactor is Fe cation. Post-translationally, phosphorylation on Ser-20 relieves the inhibitory effect on Wnt signaling. Phosphorylated on Thr-33 by CDK1 and CDK2; predominantly in G2 and M phase. Ubiquitinated by the SCF(CCNF) E3 ubiquitin-protein ligase complex; leading to its degradation by the proteasome.

It localises to the cytoplasm. The protein resides in the nucleus. It carries out the reaction a 2'-deoxyribonucleoside 5'-diphosphate + [thioredoxin]-disulfide + H2O = a ribonucleoside 5'-diphosphate + [thioredoxin]-dithiol. Its function is as follows. Provides the precursors necessary for DNA synthesis. Catalyzes the biosynthesis of deoxyribonucleotides from the corresponding ribonucleotides. Inhibits Wnt signaling. The protein is Ribonucleoside-diphosphate reductase subunit M2 (RRM2) of Homo sapiens (Human).